Consider the following 284-residue polypeptide: L-ribulose-5-phosphate 3-epimerase UlaE (284 aa).

This sequence belongs to the L-ribulose-5-phosphate 3-epimerase family.

The enzyme catalyses L-ribulose 5-phosphate = L-xylulose 5-phosphate. It functions in the pathway cofactor degradation; L-ascorbate degradation; D-xylulose 5-phosphate from L-ascorbate: step 3/4. Its function is as follows. Catalyzes the isomerization of L-xylulose-5-phosphate to L-ribulose-5-phosphate. Is involved in the anaerobic L-ascorbate utilization. The chain is L-ribulose-5-phosphate 3-epimerase UlaE from Escherichia coli (strain K12 / MC4100 / BW2952).